Here is a 354-residue protein sequence, read N- to C-terminus: 4-hydroxy-2-oxovalerate aldolase 6 (354 aa).

One can recognise a Pyruvate carboxyltransferase domain in the interval 10–262 (VRIVDTTLRD…ATGLDVMATL (253 aa)). 18–19 (RD) contacts substrate. D19 lines the Mn(2+) pocket. The active-site Proton acceptor is H22. 2 residues coordinate substrate: S172 and H201. Mn(2+) is bound by residues H201 and H203. Y292 lines the substrate pocket.

It belongs to the 4-hydroxy-2-oxovalerate aldolase family.

It carries out the reaction (S)-4-hydroxy-2-oxopentanoate = acetaldehyde + pyruvate. The chain is 4-hydroxy-2-oxovalerate aldolase 6 from Rhodococcus jostii (strain RHA1).